A 545-amino-acid polypeptide reads, in one-letter code: Chaperonin GroEL (545 aa).

ATP-binding positions include 30 to 33 (TLGP), Lys51, 87 to 91 (DGTTT), Gly415, and Asp495.

This sequence belongs to the chaperonin (HSP60) family. As to quaternary structure, forms a cylinder of 14 subunits composed of two heptameric rings stacked back-to-back. Interacts with the co-chaperonin GroES.

It is found in the cytoplasm. The catalysed reaction is ATP + H2O + a folded polypeptide = ADP + phosphate + an unfolded polypeptide.. Functionally, together with its co-chaperonin GroES, plays an essential role in assisting protein folding. The GroEL-GroES system forms a nano-cage that allows encapsulation of the non-native substrate proteins and provides a physical environment optimized to promote and accelerate protein folding. The polypeptide is Chaperonin GroEL (Shewanella oneidensis (strain ATCC 700550 / JCM 31522 / CIP 106686 / LMG 19005 / NCIMB 14063 / MR-1)).